We begin with the raw amino-acid sequence, 300 residues long: Regulatory protein NocR (300 aa).

The HTH lysR-type domain occupies methionine 1–threonine 59. A DNA-binding region (H-T-H motif) is located at residues methionine 19 to arginine 38.

The protein belongs to the LysR transcriptional regulatory family.

Positive regulatory protein for the noc operon involved in nopaline catabolism and uptake. This chain is Regulatory protein NocR (nocR), found in Agrobacterium tumefaciens (strain T37).